A 619-amino-acid polypeptide reads, in one-letter code: DNA mismatch repair protein MutL (619 aa).

It belongs to the DNA mismatch repair MutL/HexB family.

Its function is as follows. This protein is involved in the repair of mismatches in DNA. It is required for dam-dependent methyl-directed DNA mismatch repair. May act as a 'molecular matchmaker', a protein that promotes the formation of a stable complex between two or more DNA-binding proteins in an ATP-dependent manner without itself being part of a final effector complex. This chain is DNA mismatch repair protein MutL, found in Myxococcus xanthus (strain DK1622).